A 122-amino-acid chain; its full sequence is Large ribosomal subunit protein bL12 (122 aa).

This sequence belongs to the bacterial ribosomal protein bL12 family. As to quaternary structure, homodimer. Part of the ribosomal stalk of the 50S ribosomal subunit. Forms a multimeric L10(L12)X complex, where L10 forms an elongated spine to which 2 to 4 L12 dimers bind in a sequential fashion. Binds GTP-bound translation factors.

In terms of biological role, forms part of the ribosomal stalk which helps the ribosome interact with GTP-bound translation factors. Is thus essential for accurate translation. The polypeptide is Large ribosomal subunit protein bL12 (Pseudomonas entomophila (strain L48)).